A 472-amino-acid chain; its full sequence is Aspartyl/glutamyl-tRNA(Asn/Gln) amidotransferase subunit B (472 aa).

This sequence belongs to the GatB/GatE family. GatB subfamily. Heterotrimer of A, B and C subunits.

It catalyses the reaction L-glutamyl-tRNA(Gln) + L-glutamine + ATP + H2O = L-glutaminyl-tRNA(Gln) + L-glutamate + ADP + phosphate + H(+). The enzyme catalyses L-aspartyl-tRNA(Asn) + L-glutamine + ATP + H2O = L-asparaginyl-tRNA(Asn) + L-glutamate + ADP + phosphate + 2 H(+). Its function is as follows. Allows the formation of correctly charged Asn-tRNA(Asn) or Gln-tRNA(Gln) through the transamidation of misacylated Asp-tRNA(Asn) or Glu-tRNA(Gln) in organisms which lack either or both of asparaginyl-tRNA or glutaminyl-tRNA synthetases. The reaction takes place in the presence of glutamine and ATP through an activated phospho-Asp-tRNA(Asn) or phospho-Glu-tRNA(Gln). In Elusimicrobium minutum (strain Pei191), this protein is Aspartyl/glutamyl-tRNA(Asn/Gln) amidotransferase subunit B.